Here is a 572-residue protein sequence, read N- to C-terminus: DNA polymerase (572 aa).

Residues 1-222 are 3'-5' exonuclease and strand displacement activities; it reads MSRKMFSCDF…LPMDKEIRKA (222 aa). An interaction with the primer terminal protein region spans residues 56-66; that stretch reads YFHNLKFDGAF. Asp-142 and Asp-166 together coordinate Mg(2+). The DNA-binding; Involved in the formation of a stable complex between TP and phi29 DNA polymerase stretch occupies residues 223–226; that stretch reads YRGG. Positions 227–572 are initiation, polymerization and pyrophosphorolytic activities; sequence FTWLNDKYKE…VLVDSVFTIK (346 aa). Mg(2+)-binding residues include Asp-246 and Val-247. Residues Tyr-251, Lys-368, and Lys-380 each coordinate 5-methyl-UTP. Asp-453 and Asp-455 together coordinate Mg(2+). Asp-455 provides a ligand contact to 5-methyl-UTP.

Belongs to the DNA polymerase type-B family. In terms of assembly, interacts with the primer terminal protein; this interaction allows the initiation of TP-primed DNA replication at both viral DNA ends. Interacts with DNA. Requires Mg(2+) as cofactor.

It catalyses the reaction DNA(n) + a 2'-deoxyribonucleoside 5'-triphosphate = DNA(n+1) + diphosphate. Polymerase responsible for protein-primed viral DNA replication by strand displacement with high processivity and fidelity. To start replication, the DNA polymerase forms a heterodimer with a free primer terminal protein (TP), recognizes the replication origins at both 5' ends of the linear chromosome, and initiates replication using as primer the OH-group of Ser-232 of the TP. This polymerase possesses three enzymatic activities: DNA synthesis (polymerase), primer terminal protein (TP) deoxynucleotidylation, which is the formation of a covalent linkage (phosphoester) between the hydroxyl group of a specific serine residue in TP and 5'-dAMP, a reaction directed by the second T at the 3' end, and 3' to 5' exonuclease activity. Exonuclease activity has a proofreading purpose. The chain is DNA polymerase (G) from Bacillus phage M2 (Bacteriophage M2).